We begin with the raw amino-acid sequence, 565 residues long: Oxygen-dependent choline dehydrogenase (565 aa).

FAD is bound at residue 7–36; the sequence is DYIICGAGSAGNVLATRLTEDPGVTVLLLE. Residue histidine 474 is the Proton acceptor of the active site.

This sequence belongs to the GMC oxidoreductase family. FAD is required as a cofactor.

It catalyses the reaction choline + A = betaine aldehyde + AH2. The catalysed reaction is betaine aldehyde + NAD(+) + H2O = glycine betaine + NADH + 2 H(+). It participates in amine and polyamine biosynthesis; betaine biosynthesis via choline pathway; betaine aldehyde from choline (cytochrome c reductase route): step 1/1. Functionally, involved in the biosynthesis of the osmoprotectant glycine betaine. Catalyzes the oxidation of choline to betaine aldehyde and betaine aldehyde to glycine betaine at the same rate. The polypeptide is Oxygen-dependent choline dehydrogenase (Burkholderia mallei (strain ATCC 23344)).